The sequence spans 201 residues: Recombination protein RecR (201 aa).

The C4-type zinc-finger motif lies at 60–75 (CRSCGNVDTSDPCTIC). One can recognise a Toprim domain in the interval 83-178 (TTLVVVEDVS…TVTRLAHGVP (96 aa)).

The protein belongs to the RecR family.

Functionally, may play a role in DNA repair. It seems to be involved in an RecBC-independent recombinational process of DNA repair. It may act with RecF and RecO. In Methylorubrum extorquens (strain CM4 / NCIMB 13688) (Methylobacterium extorquens), this protein is Recombination protein RecR.